The sequence spans 359 residues: GTP cyclohydrolase FolE2 (359 aa).

Belongs to the GTP cyclohydrolase IV family.

The catalysed reaction is GTP + H2O = 7,8-dihydroneopterin 3'-triphosphate + formate + H(+). Its pathway is cofactor biosynthesis; 7,8-dihydroneopterin triphosphate biosynthesis; 7,8-dihydroneopterin triphosphate from GTP: step 1/1. In terms of biological role, converts GTP to 7,8-dihydroneopterin triphosphate. The polypeptide is GTP cyclohydrolase FolE2 (Cereibacter sphaeroides (strain ATCC 17029 / ATH 2.4.9) (Rhodobacter sphaeroides)).